The chain runs to 607 residues: Sulfite reductase [NADPH] flavoprotein alpha-component (607 aa).

Residues 66 to 204 (VTILYGSQTG…AAGQWHADVL (139 aa)) enclose the Flavodoxin-like domain. FMN-binding positions include 72–77 (SQTGNG), 119–122 (STHG), and 155–164 (LGDSSYEFFC). The FAD-binding FR-type domain maps to 239–456 (QNPYRAEVLV…VEPNKHFRLP (218 aa)). Residues Thr-327, Leu-361, 395–398 (RLYS), 413–415 (TVA), and 428–431 (GGAS) contribute to the FAD site. NADP(+) contacts are provided by residues 527–528 (SR), 533–537 (KIYVQ), and Asp-569. Tyr-607 is an FAD binding site.

Belongs to the NADPH-dependent sulphite reductase flavoprotein subunit CysJ family. The protein in the N-terminal section; belongs to the flavodoxin family. This sequence in the C-terminal section; belongs to the flavoprotein pyridine nucleotide cytochrome reductase family. As to quaternary structure, alpha(8)-beta(8). The alpha component is a flavoprotein, the beta component is a hemoprotein. The cofactor is FAD. FMN is required as a cofactor.

The enzyme catalyses hydrogen sulfide + 3 NADP(+) + 3 H2O = sulfite + 3 NADPH + 4 H(+). The protein operates within sulfur metabolism; hydrogen sulfide biosynthesis; hydrogen sulfide from sulfite (NADPH route): step 1/1. In terms of biological role, component of the sulfite reductase complex that catalyzes the 6-electron reduction of sulfite to sulfide. This is one of several activities required for the biosynthesis of L-cysteine from sulfate. The flavoprotein component catalyzes the electron flow from NADPH -&gt; FAD -&gt; FMN to the hemoprotein component. This chain is Sulfite reductase [NADPH] flavoprotein alpha-component, found in Shewanella oneidensis (strain ATCC 700550 / JCM 31522 / CIP 106686 / LMG 19005 / NCIMB 14063 / MR-1).